The following is a 142-amino-acid chain: Large ribosomal subunit protein uL13 (142 aa).

Belongs to the universal ribosomal protein uL13 family. As to quaternary structure, part of the 50S ribosomal subunit.

In terms of biological role, this protein is one of the early assembly proteins of the 50S ribosomal subunit, although it is not seen to bind rRNA by itself. It is important during the early stages of 50S assembly. The polypeptide is Large ribosomal subunit protein uL13 (Klebsiella pneumoniae (strain 342)).